The sequence spans 259 residues: Sphinganine C4-monooxygenase 2 (259 aa).

A run of 3 helical transmembrane segments spans residues 10–30, 54–74, and 91–111; these read FLGT…YICL, AVVK…VILF, and ILLL…WQYF. The Fatty acid hydroxylase domain maps to 98–234; the sequence is FIIAMLVIDT…FVMWDRILGT (137 aa). Residues 113–117 carry the Histidine box-1 motif; it reads HRYMH. A Histidine box-2 motif is present at residues 127-131; it reads HSQHH. Positions 206-212 match the Histidine box-3 motif; it reads YHDVHHQ.

This sequence belongs to the sterol desaturase family. Fe cation is required as a cofactor. Ubiquitous, with higher levels in flowers and roots.

Its subcellular location is the endoplasmic reticulum membrane. It carries out the reaction a dihydroceramide + 2 Fe(II)-[cytochrome b5] + O2 + 2 H(+) = a phytoceramide + 2 Fe(III)-[cytochrome b5] + H2O. Its pathway is membrane lipid metabolism; sphingolipid biosynthesis. Its function is as follows. Involved in sphingolipid trihydroxy long-chain base (4-hydroxysphinganine) biosynthesis. Can use C18- and C20-sphinganine as substrates to produce C18- and C20-phytosphinganines (D-ribo-2-amino-1,3,4-trihydroxyoctadecane and -eicosane). The protein is Sphinganine C4-monooxygenase 2 (SBH2) of Arabidopsis thaliana (Mouse-ear cress).